The following is a 342-amino-acid chain: Large ribosomal subunit protein uL3 (342 aa).

A disordered region spans residues 1-22; that stretch reads MGHRKLSSPRRGSAGLRPRKRA.

It belongs to the universal ribosomal protein uL3 family. As to quaternary structure, part of the 50S ribosomal subunit. Forms a cluster with proteins L14 and L24e.

One of the primary rRNA binding proteins, it binds directly near the 3'-end of the 23S rRNA, where it nucleates assembly of the 50S subunit. This is Large ribosomal subunit protein uL3 from Sulfolobus acidocaldarius (strain ATCC 33909 / DSM 639 / JCM 8929 / NBRC 15157 / NCIMB 11770).